The chain runs to 297 residues: 4-diphosphocytidyl-2-C-methyl-D-erythritol kinase (297 aa).

Lysine 10 is an active-site residue. 95–105 (PVAGGMAGGSA) contributes to the ATP binding site. Aspartate 137 is a catalytic residue.

Belongs to the GHMP kinase family. IspE subfamily.

The catalysed reaction is 4-CDP-2-C-methyl-D-erythritol + ATP = 4-CDP-2-C-methyl-D-erythritol 2-phosphate + ADP + H(+). It functions in the pathway isoprenoid biosynthesis; isopentenyl diphosphate biosynthesis via DXP pathway; isopentenyl diphosphate from 1-deoxy-D-xylulose 5-phosphate: step 3/6. Functionally, catalyzes the phosphorylation of the position 2 hydroxy group of 4-diphosphocytidyl-2C-methyl-D-erythritol. The chain is 4-diphosphocytidyl-2-C-methyl-D-erythritol kinase from Streptomyces avermitilis (strain ATCC 31267 / DSM 46492 / JCM 5070 / NBRC 14893 / NCIMB 12804 / NRRL 8165 / MA-4680).